We begin with the raw amino-acid sequence, 448 residues long: uncharacterized protein (448 aa).

Positions 428–440 (PFKTDCDPNNDND) are enriched in polar residues. The interval 428–448 (PFKTDCDPNNDNDLTPPAVFG) is disordered.

This is an uncharacterized protein from Mycoplasma pneumoniae (strain ATCC 29342 / M129 / Subtype 1) (Mycoplasmoides pneumoniae).